A 368-amino-acid polypeptide reads, in one-letter code: tRNA 2-selenouridine synthase (368 aa).

The region spanning 15–138 (FLNQHPIMDV…MRQYLIGVIE (124 aa)) is the Rhodanese domain. Cysteine 98 (S-selanylcysteine intermediate) is an active-site residue.

This sequence belongs to the SelU family. Monomer.

The catalysed reaction is 5-methylaminomethyl-2-thiouridine(34) in tRNA + selenophosphate + (2E)-geranyl diphosphate + H2O + H(+) = 5-methylaminomethyl-2-selenouridine(34) in tRNA + (2E)-thiogeraniol + phosphate + diphosphate. It carries out the reaction 5-methylaminomethyl-2-thiouridine(34) in tRNA + (2E)-geranyl diphosphate = 5-methylaminomethyl-S-(2E)-geranyl-thiouridine(34) in tRNA + diphosphate. The enzyme catalyses 5-methylaminomethyl-S-(2E)-geranyl-thiouridine(34) in tRNA + selenophosphate + H(+) = 5-methylaminomethyl-2-(Se-phospho)selenouridine(34) in tRNA + (2E)-thiogeraniol. It catalyses the reaction 5-methylaminomethyl-2-(Se-phospho)selenouridine(34) in tRNA + H2O = 5-methylaminomethyl-2-selenouridine(34) in tRNA + phosphate. In terms of biological role, involved in the post-transcriptional modification of the uridine at the wobble position (U34) of tRNA(Lys), tRNA(Glu) and tRNA(Gln). Catalyzes the conversion of 2-thiouridine (S2U-RNA) to 2-selenouridine (Se2U-RNA). Acts in a two-step process involving geranylation of 2-thiouridine (S2U) to S-geranyl-2-thiouridine (geS2U) and subsequent selenation of the latter derivative to 2-selenouridine (Se2U) in the tRNA chain. This is tRNA 2-selenouridine synthase from Shewanella baltica (strain OS185).